An 845-amino-acid polypeptide reads, in one-letter code: Krueppel homolog 1 (845 aa).

Positions Q141–Q164 are disordered. C2H2-type zinc fingers lie at residues F194–H216, Y271–H293, F299–H321, Y327–H349, H355–H377, Y383–H407, Y413–H435, and Y441–H463. Disordered regions lie at residues D469–Q610 and G757–S845. Low complexity-rich tracts occupy residues A474–S491, S498–P508, and A532–A559. Polar residues predominate over residues S582–H591. Low complexity predominate over residues R759 to S775. Basic and acidic residues predominate over residues N796–S809. The segment covering G810–G823 has biased composition (low complexity).

It belongs to the krueppel C2H2-type zinc-finger protein family.

In terms of biological role, plays a general role in the hierarchies of gene expression leading to metamorphosis. This Drosophila melanogaster (Fruit fly) protein is Krueppel homolog 1 (Kr-h1).